The sequence spans 150 residues: Protein Turandot X1/X2 (150 aa).

An N-terminal signal peptide occupies residues 1–22 (MRLYIGSLLICVLLGIVPFATA). The disordered stretch occupies residues 127-150 (REEGQSNHANSPTTSPSRIQKMTK). Polar residues predominate over residues 132-150 (SNHANSPTTSPSRIQKMTK).

It belongs to the Turandot family.

It is found in the secreted. Its function is as follows. A humoral factor that may play a role in stress tolerance. The chain is Protein Turandot X1/X2 from Drosophila sechellia (Fruit fly).